A 444-amino-acid polypeptide reads, in one-letter code: F-box protein At1g53790 (444 aa).

The F-box domain occupies 76-125; it reads VSCFRYIPIDLLMDIFSRVPAKSIARFRCVSKLWESILCRPDFKELFMTM.

This is F-box protein At1g53790 from Arabidopsis thaliana (Mouse-ear cress).